The chain runs to 30 residues: Ribonuclease pancreatic (30 aa).

The span at 1 to 13 shows a compositional bias: basic and acidic residues; the sequence is KETAAAKFERQHM. Residues 1-21 are disordered; sequence KETAAAKFERQHMDPAPAAAX. The substrate site is built by K7 and R10. The active-site Proton acceptor is the H12.

Belongs to the pancreatic ribonuclease family. As to quaternary structure, monomer. Interacts with and forms tight 1:1 complexes with RNH1. Dimerization of two such complexes may occur. Interaction with RNH1 inhibits this protein. As to expression, pancreas.

The protein localises to the secreted. The catalysed reaction is an [RNA] containing cytidine + H2O = an [RNA]-3'-cytidine-3'-phosphate + a 5'-hydroxy-ribonucleotide-3'-[RNA].. It catalyses the reaction an [RNA] containing uridine + H2O = an [RNA]-3'-uridine-3'-phosphate + a 5'-hydroxy-ribonucleotide-3'-[RNA].. Endonuclease that catalyzes the cleavage of RNA on the 3' side of pyrimidine nucleotides. Acts on single-stranded and double-stranded RNA. The sequence is that of Ribonuclease pancreatic (RNASE1) from Odocoileus virginianus virginianus (Virginia white-tailed deer).